The chain runs to 608 residues: Probable cytosolic Fe-S cluster assembly factor SPAC806.02c (608 aa).

ATP is bound at residue 13–20 (GKGGVGKS). [4Fe-4S] cluster-binding residues include cysteine 201 and cysteine 204. WD repeat units follow at residues 288–327 (GHTG…LVHV), 331–371 (FHTR…WECT), 376–415 (GHEN…EFDC), 421–460 (EHTQ…WALT), 465–504 (GHTN…EDVA), 529–567 (IHKG…EALW), and 576–608 (AHGV…WSFK).

This sequence in the N-terminal section; belongs to the Mrp/NBP35 ATP-binding proteins family. NUBP2/CFD1 subfamily. In the C-terminal section; belongs to the WD repeat CIA1 family. Heterotetramer of 2 nbp35 and 2 SPAC806.02c chains. [4Fe-4S] cluster is required as a cofactor.

Its subcellular location is the cytoplasm. It localises to the nucleus. Its function is as follows. Fusion protein of two essential components of the cytosolic iron-sulfur (Fe/S) protein assembly (CIA) machinery. Required for maturation of extramitochondrial Fe-S proteins. May form a heterotetramer with nubp35, functioning as a Fe-S scaffold complex, mediating the de novo assembly of an Fe-S cluster and its transfer to target apoproteins. This is Probable cytosolic Fe-S cluster assembly factor SPAC806.02c from Schizosaccharomyces pombe (strain 972 / ATCC 24843) (Fission yeast).